Here is a 159-residue protein sequence, read N- to C-terminus: MVKVERLLINYKTLEEFKKFREYGIQELSMLEDLESNMIENDSNSPFYGIYYGNRLVARMSLYKVDGKSNQYFEEGQDYLELWKLEVLPGYQRNGYGTMLVEFAKSFGLPIRTSPRVKSSDFWNKMGFTPVKYDMARDKGENPLVWHPASEPSQSSESA.

The region spanning 7–151 (LLINYKTLEE…NPLVWHPASE (145 aa)) is the N-acetyltransferase domain.

This is an uncharacterized protein from Bacillus licheniformis (strain ATCC 14580 / DSM 13 / JCM 2505 / CCUG 7422 / NBRC 12200 / NCIMB 9375 / NCTC 10341 / NRRL NRS-1264 / Gibson 46).